The following is a 629-amino-acid chain: DNA topoisomerase 4 subunit B (629 aa).

ATP-binding positions include Y4, N41, D68, 109-115 (GLHGVGI), and K333. The 114-residue stretch at 411–524 (AELFLVEGDS…AGHVYVAMPP (114 aa)) folds into the Toprim domain. 3 residues coordinate Mg(2+): E417, D489, and D491.

It belongs to the type II topoisomerase family. ParE type 1 subfamily. Heterotetramer composed of ParC and ParE. Mg(2+) is required as a cofactor. Requires Mn(2+) as cofactor. It depends on Ca(2+) as a cofactor.

It catalyses the reaction ATP-dependent breakage, passage and rejoining of double-stranded DNA.. Functionally, topoisomerase IV is essential for chromosome segregation. It relaxes supercoiled DNA. Performs the decatenation events required during the replication of a circular DNA molecule. This chain is DNA topoisomerase 4 subunit B, found in Pseudomonas aeruginosa (strain ATCC 15692 / DSM 22644 / CIP 104116 / JCM 14847 / LMG 12228 / 1C / PRS 101 / PAO1).